The primary structure comprises 124 residues: Small ribosomal subunit protein uS12 (124 aa).

The interval Met-1–Glu-25 is disordered. Asp-89 carries the 3-methylthioaspartic acid modification. A disordered region spans residues Thr-104–Ser-124. Over residues Lys-111–Ser-124 the composition is skewed to basic residues.

It belongs to the universal ribosomal protein uS12 family. As to quaternary structure, part of the 30S ribosomal subunit. Contacts proteins S8 and S17. May interact with IF1 in the 30S initiation complex.

Functionally, with S4 and S5 plays an important role in translational accuracy. In terms of biological role, interacts with and stabilizes bases of the 16S rRNA that are involved in tRNA selection in the A site and with the mRNA backbone. Located at the interface of the 30S and 50S subunits, it traverses the body of the 30S subunit contacting proteins on the other side and probably holding the rRNA structure together. The combined cluster of proteins S8, S12 and S17 appears to hold together the shoulder and platform of the 30S subunit. The polypeptide is Small ribosomal subunit protein uS12 (Solibacter usitatus (strain Ellin6076)).